Reading from the N-terminus, the 322-residue chain is Transmembrane and ubiquitin-like domain-containing protein 2 (322 aa).

The chain crosses the membrane as a helical span at residues 38–58 (VVAGVVVLILALVLAWLSTYV). Positions 88 to 168 (VAGQGTPEPT…VRSEDSTCLP (81 aa)) are disordered. Residues 115 to 130 (EGGGDPTGEPGAGGGV) are compositionally biased toward gly residues. In terms of domain architecture, Ubiquitin-like spans 174 to 247 (ISVRLKFFND…IHCHRSPPGS (74 aa)). Helical transmembrane passes span 267 to 287 (LGVSVGSLMVPVFVVLLGVVW) and 296 to 316 (FFTAPATVSLVGVTVFFSFLV).

The protein resides in the membrane. The polypeptide is Transmembrane and ubiquitin-like domain-containing protein 2 (TMUB2) (Bos taurus (Bovine)).